The primary structure comprises 469 residues: ATP synthase subunit beta (469 aa).

Residue 153–160 (GGAGVGKT) participates in ATP binding.

It belongs to the ATPase alpha/beta chains family. In terms of assembly, F-type ATPases have 2 components, CF(1) - the catalytic core - and CF(0) - the membrane proton channel. CF(1) has five subunits: alpha(3), beta(3), gamma(1), delta(1), epsilon(1). CF(0) has three main subunits: a(1), b(2) and c(9-12). The alpha and beta chains form an alternating ring which encloses part of the gamma chain. CF(1) is attached to CF(0) by a central stalk formed by the gamma and epsilon chains, while a peripheral stalk is formed by the delta and b chains.

It is found in the cell inner membrane. The enzyme catalyses ATP + H2O + 4 H(+)(in) = ADP + phosphate + 5 H(+)(out). Functionally, produces ATP from ADP in the presence of a proton gradient across the membrane. The catalytic sites are hosted primarily by the beta subunits. The protein is ATP synthase subunit beta of Pseudothermotoga lettingae (strain ATCC BAA-301 / DSM 14385 / NBRC 107922 / TMO) (Thermotoga lettingae).